A 447-amino-acid chain; its full sequence is MSEYQVAYLPIGVPTFHLESAQAGFEKSVRLLTSLSTHVVCPQKMLLTIEELNTFLDMICPQLLIIQNITFANAAYASQIRHRFSCPTLLWTLREPVIDGGRLRLNSLTGAYSAANAMRALGDDRFAYVFGAPEEEAVIHKIHAFLRAGEVYHKLHSLKMAAVGHTPQGFGFGRALDSELLHTFGVTLESIETRELMEKAVSYTEEECADCRKAAEQAMTGLENTPAKNRDAFVRLYKAYDDYVKANGIGALSSRCWPDFFTAYGTPVCSVLAMLNDNLIASACESDVYGALSMYIGTQLTGLPTFFGDPVSLDEAENTITYWHCGTAACSLARADTGAQVGVHPNRKIGPTMEFGCRPAEQATVFRVGRKPDGTFRLLILPGRALDKPKQFCGTSVVVQPKADALRVVESSVKAGWEPHFTVIYGDVKDELLALADMLRLEAEVYE.

This sequence belongs to the SqvD family.

The enzyme catalyses 6-sulfo-beta-D-quinovose = 6-deoxy-6-sulfo-D-fructose. In terms of biological role, part of the sulfo-TK pathway, a D-sulfoquinovose degradation pathway that produces 2-hydroxyethane-1-sulfonate (isethionate). Catalyzes the isomerization of sulfoquinovose (SQ) to 6-deoxy-6-sulfo-D-fructose (SF). The chain is Sulfoquinovose isomerase from Clostridium sp. (strain MSTE9).